A 531-amino-acid polypeptide reads, in one-letter code: Bifunctional protein TrpGD (531 aa).

Positions 3-196 (DILLLDNIDS…LAWAQQKLEP (194 aa)) constitute a Glutamine amidotransferase type-1 domain. 57–59 (GPG) is an L-glutamine binding site. The active-site Nucleophile; for GATase activity is Cys84. Residues Gln88 and 134–135 (SL) each bind L-glutamine. Residues His170 and Glu172 each act as for GATase activity in the active site. An anthranilate phosphoribosyltransferase region spans residues 202-531 (PILEKLYQAQ…DRVTALAARG (330 aa)).

This sequence in the C-terminal section; belongs to the anthranilate phosphoribosyltransferase family. As to quaternary structure, heterotetramer consisting of two non-identical subunits: a beta subunit (TrpG) and a large alpha subunit (TrpE).

It carries out the reaction chorismate + L-glutamine = anthranilate + pyruvate + L-glutamate + H(+). It catalyses the reaction N-(5-phospho-beta-D-ribosyl)anthranilate + diphosphate = 5-phospho-alpha-D-ribose 1-diphosphate + anthranilate. Its pathway is amino-acid biosynthesis; L-tryptophan biosynthesis; L-tryptophan from chorismate: step 1/5. It functions in the pathway amino-acid biosynthesis; L-tryptophan biosynthesis; L-tryptophan from chorismate: step 2/5. Its activity is regulated as follows. Cooperatively feedback inhibited by tryptophan. Functionally, part of a heterotetrameric complex that catalyzes the two-step biosynthesis of anthranilate, an intermediate in the biosynthesis of L-tryptophan. In the first step, the glutamine-binding beta subunit (TrpG) of anthranilate synthase (AS) provides the glutamine amidotransferase activity which generates ammonia as a substrate that, along with chorismate, is used in the second step, catalyzed by the large alpha subunit of AS (TrpE) to produce anthranilate. In the absence of TrpG, TrpE can synthesize anthranilate directly from chorismate and high concentrations of ammonia. In addition to synthesizing anthranilate, it also catalyzes the second step of the pathway, the transfer of the phosphoribosyl group of 5-phosphorylribose-1-pyrophosphate (PRPP) to anthranilate. In Escherichia coli (strain K12), this protein is Bifunctional protein TrpGD (trpGD).